A 201-amino-acid chain; its full sequence is ATP-dependent Clp protease proteolytic subunit (201 aa).

Serine 101 acts as the Nucleophile in catalysis. Residue histidine 126 is part of the active site.

This sequence belongs to the peptidase S14 family. Component of the chloroplastic Clp protease core complex.

It localises to the plastid. The protein localises to the chloroplast stroma. The enzyme catalyses Hydrolysis of proteins to small peptides in the presence of ATP and magnesium. alpha-casein is the usual test substrate. In the absence of ATP, only oligopeptides shorter than five residues are hydrolyzed (such as succinyl-Leu-Tyr-|-NHMec, and Leu-Tyr-Leu-|-Tyr-Trp, in which cleavage of the -Tyr-|-Leu- and -Tyr-|-Trp bonds also occurs).. In terms of biological role, cleaves peptides in various proteins in a process that requires ATP hydrolysis. Has a chymotrypsin-like activity. Plays a major role in the degradation of misfolded proteins. The chain is ATP-dependent Clp protease proteolytic subunit from Staurastrum punctulatum (Green alga).